The sequence spans 349 residues: Divinyl chlorophyll a/b light-harvesting protein PcbE (349 aa).

6 consecutive transmembrane segments (helical) span residues 27–47 (FIAA…GSTL), 65–85 (IFLA…AWTG), 88–108 (VASI…GGLL), 201–221 (VLGG…FHIA), 241–261 (AILS…AFWC), and 308–328 (LANV…WHAL).

Belongs to the PsbB/PsbC family. IsiA/Pcb subfamily. As to quaternary structure, the antenna complex consists of divinyl chlorophylls (a and b) and divinyl chlorophyll a/b binding proteins and binds more divinyl chlorophyll b than does the antenna complex from high-light-adapted Prochlorococcus. Divinyl chlorophyll a is required as a cofactor. It depends on divinyl chlorophyll b as a cofactor.

The protein localises to the cellular thylakoid membrane. The antenna complex functions as a light receptor, it captures and delivers excitation energy to photosystems II and I. The Prochlorales pcb genes are not related to higher plant LHCs. This chain is Divinyl chlorophyll a/b light-harvesting protein PcbE (pcbE), found in Prochlorococcus marinus (strain NATL2A).